The primary structure comprises 207 residues: ATP-dependent Clp protease proteolytic subunit (207 aa).

Ser111 functions as the Nucleophile in the catalytic mechanism. Residue His136 is part of the active site.

The protein belongs to the peptidase S14 family. As to quaternary structure, fourteen ClpP subunits assemble into 2 heptameric rings which stack back to back to give a disk-like structure with a central cavity, resembling the structure of eukaryotic proteasomes. Component of the ClpAP and ClpXP complexes.

The protein resides in the cytoplasm. It carries out the reaction Hydrolysis of proteins to small peptides in the presence of ATP and magnesium. alpha-casein is the usual test substrate. In the absence of ATP, only oligopeptides shorter than five residues are hydrolyzed (such as succinyl-Leu-Tyr-|-NHMec, and Leu-Tyr-Leu-|-Tyr-Trp, in which cleavage of the -Tyr-|-Leu- and -Tyr-|-Trp bonds also occurs).. Its function is as follows. Cleaves peptides in various proteins in a process that requires ATP hydrolysis. Has a chymotrypsin-like activity. Plays a major role in the degradation of misfolded proteins. The chain is ATP-dependent Clp protease proteolytic subunit from Escherichia coli O139:H28 (strain E24377A / ETEC).